The chain runs to 538 residues: MPRGWAAPLLLLLLQGGWGCPDLVCYTDYLQTVICILEMWNLHPSTLTLTWQDQYEELKDEATSCSLHRSAHNATHATYTCHMDVFHFMADDIFSVNITDQSGNYSQECGSFLLAESIKPAPPFNVTVTFSGQYNISWRSDYEDPAFYMLKGKLQYELQYRNRGDPWAVSPRRKLISVDSRSVSLLPLEFRKDSSYELQVRAGPMPGSSYQGTWSEWSDPVIFQTQSEELKEGWNPHLLLLLLLVIVFIPAFWSLKTHPLWRLWKKIWAVPSPERFFMPLYKGCSGDFKKWVGAPFTGSSLELGPWSPEVPSTLEVYSCHPPRSPAKRLQLTELQEPAELVESDGVPKPSFWPTAQNSGGSAYSEERDRPYGLVSIDTVTVLDAEGPCTWPCSCEDDGYPALDLDAGLEPSPGLEDPLLDAGTTVLSCGCVSAGSPGLGGPLGSLLDRLKPPLADGEDWAGGLPWGGRSPGGVSESEAGSPLAGLDMDTFDSGFVGSDCSSPVECDFTSPGDEGPPRSYLRQWVVIPPPLSSPGPQAS.

The first 19 residues, 1–19 (MPRGWAAPLLLLLLQGGWG), serve as a signal peptide directing secretion. Intrachain disulfides connect Cys20/Cys109, Cys25/Cys35, and Cys65/Cys81. The Extracellular portion of the chain corresponds to 20–232 (CPDLVCYTDY…FQTQSEELKE (213 aa)). 2 consecutive Fibronectin type-III domains span residues 21 to 118 (PDLV…AESI) and 119 to 228 (KPAP…TQSE). N-linked (GlcNAc...) asparagine glycosylation is found at Asn73, Asn97, Asn104, Asn125, and Asn135. Residue Trp214 is glycosylated (C-linked (Man) tryptophan). Positions 214–218 (WSEWS) match the WSXWS motif motif. The chain crosses the membrane as a helical span at residues 233–253 (GWNPHLLLLLLLVIVFIPAFW). At 254–538 (SLKTHPLWRL…PLSSPGPQAS (285 aa)) the chain is on the cytoplasmic side. The Box 1 motif signature appears at 266–274 (KIWAVPSPE). 2 disordered regions span residues 342 to 367 (ESDG…SEER) and 457 to 487 (EDWA…GLDM).

This sequence belongs to the type I cytokine receptor family. Type 4 subfamily. Heterodimer with the common gamma subunit. Associates with JAK1. C-mannosylated at Trp-214 in the WSXWS motif, the sugar chain makes extensive hydrogen bonds with Asn-73 sugar, and bridges the two fibronectin domains transforming the V-shaped receptor into an A-frame. In terms of tissue distribution, selectively expressed in lymphoid tissues. Most highly expressed in thymus and spleen.

It localises to the membrane. Its function is as follows. This is a receptor for interleukin-21. In Homo sapiens (Human), this protein is Interleukin-21 receptor (IL21R).